The following is a 511-amino-acid chain: Bifunctional purine biosynthesis protein PurH (511 aa).

Residues 1 to 145 form the MGS-like domain; the sequence is MKKRALVSVS…KNHKFVSVIV (145 aa).

The protein belongs to the PurH family.

It carries out the reaction (6R)-10-formyltetrahydrofolate + 5-amino-1-(5-phospho-beta-D-ribosyl)imidazole-4-carboxamide = 5-formamido-1-(5-phospho-D-ribosyl)imidazole-4-carboxamide + (6S)-5,6,7,8-tetrahydrofolate. The enzyme catalyses IMP + H2O = 5-formamido-1-(5-phospho-D-ribosyl)imidazole-4-carboxamide. The protein operates within purine metabolism; IMP biosynthesis via de novo pathway; 5-formamido-1-(5-phospho-D-ribosyl)imidazole-4-carboxamide from 5-amino-1-(5-phospho-D-ribosyl)imidazole-4-carboxamide (10-formyl THF route): step 1/1. Its pathway is purine metabolism; IMP biosynthesis via de novo pathway; IMP from 5-formamido-1-(5-phospho-D-ribosyl)imidazole-4-carboxamide: step 1/1. This Bacillus cereus (strain ZK / E33L) protein is Bifunctional purine biosynthesis protein PurH.